The primary structure comprises 866 residues: Protein translocase subunit SecA (866 aa).

Residues glutamine 87, 105–109 (GEGKT), and aspartate 514 each bind ATP. The disordered stretch occupies residues 819–858 (VSPIGTPSSEGGGETSGADTYSNKKIGRNDPCPCGSGKKY). 4 residues coordinate Zn(2+): cysteine 850, cysteine 852, cysteine 861, and cysteine 862.

Belongs to the SecA family. As to quaternary structure, monomer and homodimer. Part of the essential Sec protein translocation apparatus which comprises SecA, SecYEG and auxiliary proteins SecDF. Other proteins may also be involved. The cofactor is Zn(2+).

The protein resides in the cell inner membrane. The protein localises to the cytoplasm. It carries out the reaction ATP + H2O + cellular proteinSide 1 = ADP + phosphate + cellular proteinSide 2.. Its function is as follows. Part of the Sec protein translocase complex. Interacts with the SecYEG preprotein conducting channel. Has a central role in coupling the hydrolysis of ATP to the transfer of proteins into and across the cell membrane, serving as an ATP-driven molecular motor driving the stepwise translocation of polypeptide chains across the membrane. This chain is Protein translocase subunit SecA, found in Elusimicrobium minutum (strain Pei191).